A 284-amino-acid chain; its full sequence is Bifunctional protein FolD (284 aa).

NADP(+) is bound by residues 166–168 and isoleucine 232; that span reads GAS.

Belongs to the tetrahydrofolate dehydrogenase/cyclohydrolase family. In terms of assembly, homodimer.

The enzyme catalyses (6R)-5,10-methylene-5,6,7,8-tetrahydrofolate + NADP(+) = (6R)-5,10-methenyltetrahydrofolate + NADPH. It carries out the reaction (6R)-5,10-methenyltetrahydrofolate + H2O = (6R)-10-formyltetrahydrofolate + H(+). The protein operates within one-carbon metabolism; tetrahydrofolate interconversion. Its function is as follows. Catalyzes the oxidation of 5,10-methylenetetrahydrofolate to 5,10-methenyltetrahydrofolate and then the hydrolysis of 5,10-methenyltetrahydrofolate to 10-formyltetrahydrofolate. The chain is Bifunctional protein FolD from Shewanella amazonensis (strain ATCC BAA-1098 / SB2B).